A 350-amino-acid chain; its full sequence is Transcriptional activator hacA (350 aa).

Residues 1-118 (MKSADRFSPV…RLEMEKLESE (118 aa)) are disordered. Residues 35–47 (PADTSLQTKNVVA) show a composition bias toward polar residues. Composition is skewed to basic and acidic residues over residues 81-95 (KTEDEKEQRRIERVL) and 104-118 (SRERKRLEMEKLESE). The 64-residue stretch at 87 to 150 (EQRRIERVLR…NRLSQQVAQL (64 aa)) folds into the bZIP domain. Positions 89 to 142 (RRIERVLRNRAAAQTSRERKRLEMEKLESEKIDMEQQNQFLLQRLAQMEAENNR) are basic motif. Residues 143–150 (LSQQVAQL) are leucine-zipper. 3 disordered regions span residues 152 to 175 (AEVRGSRHSTPTSSSPASVSPTLT), 194 to 218 (PTPSVTDYSPTLKPSSLAESPDLTQ), and 328 to 350 (SLQPSHGASTSRCDGQGIAAGSA). Positions 160–175 (STPTSSSPASVSPTLT) are enriched in low complexity. 2 stretches are compositionally biased toward polar residues: residues 196–211 (PSVTDYSPTLKPSSLA) and 329–340 (LQPSHGASTSRC).

It belongs to the bZIP family. In terms of assembly, homodimer.

It localises to the nucleus. Transcriptional activator involved in the unfolded protein response (UPR) pathway. Recognizes and binds to the UPR element (UPRE) in the promoter of UPR-regulated genes. Increases the synthesis of endoplasmic reticulum-resident proteins required for protein folding as well as components of the secretory pathway. In Emericella nidulans (strain FGSC A4 / ATCC 38163 / CBS 112.46 / NRRL 194 / M139) (Aspergillus nidulans), this protein is Transcriptional activator hacA (hacA).